The primary structure comprises 189 residues: UPF0301 protein PA14_05290 (189 aa).

This sequence belongs to the UPF0301 (AlgH) family.

The chain is UPF0301 protein PA14_05290 from Pseudomonas aeruginosa (strain UCBPP-PA14).